A 572-amino-acid chain; its full sequence is Receptor-type adenylate cyclase GRESAG 4.2 (572 aa).

Residues 1-225 are Extracellular-facing; that stretch reads RKTLLTFGLN…PNGNALTPAQ (225 aa). N-linked (GlcNAc...) asparagine glycosylation is found at asparagine 10, asparagine 77, and asparagine 152. Residues 226–251 traverse the membrane as a helical segment; sequence LDWCGWCRFACADTGSRLTVFLCCIM. Residues 252-572 lie on the Cytoplasmic side of the membrane; sequence RNKRDNDNAP…TVRRLSVALQ (321 aa). A Guanylate cyclase domain is found at 269–424; that stretch reads TLIFTDIESS…QTANTAARTE (156 aa). Residues aspartate 274 and aspartate 317 each coordinate Mg(2+).

The protein belongs to the adenylyl cyclase class-3 family. Mg(2+) serves as cofactor.

Its subcellular location is the cell membrane. The enzyme catalyses ATP = 3',5'-cyclic AMP + diphosphate. Its function is as follows. Could act as a receptor for an unknown ligand. This is Receptor-type adenylate cyclase GRESAG 4.2 (GRESAG 4.2) from Trypanosoma brucei brucei.